The following is a 237-amino-acid chain: Sugar fermentation stimulation protein homolog (237 aa).

This sequence belongs to the SfsA family.

This Thioalkalivibrio sulfidiphilus (strain HL-EbGR7) protein is Sugar fermentation stimulation protein homolog.